We begin with the raw amino-acid sequence, 590 residues long: MMRSHYCGGLNRENIGQEVTLSGWVHRRRDLGGLIFIDMRDREGIVQVCFDPKYQQALTRAASLRNEFCIQIKGEVIARPDNQINKNMATGEVEVLAKELSVYNAADVLPLDFNQNNTEEQRLKYRYLDLRRPEMAQRLKTRAKITSFVRRFMDDNGFLDIETPMLTKATPEGARDYLVPSRVHKGKFYALPQSPQLFKQLLMMSGFDRYYQIVKCFRDEDLRADRQPEFTQIDVETSFLTAPEVREIMEKMIHGLWLNTINVDLGKFPVMTWTEAMQRFGSDKPDLRNPLEITDVADIVKDVDFKVFSGPANDPNGRVAVIRVPNGASVTRKQIDEYTQFVGIYGAKGLAWLKVNDVNAGLEGVQSPIAKFLTEEKIKAIFDRTSAQTGDILFFGADKWQTATDALGALRLKLGRDLALTQLDQWAPLWVIDFPMFERDEEGNLAAMHHPFTSPKDFSPEQLEADPTGAVANAYDMVINGYEVGGGSVRIFDPKMQQTVFRILGIDEQQQREKFGFLLDALKFGTPPHAGLAFGLDRLTMLLTGTDNIRDVIAFPKTTAAACLMTEAPSFANPQALEELSISVVKTDKE.

Glutamate 172 contributes to the L-aspartate binding site. An aspartate region spans residues 196-199 (QLFK). Residue arginine 218 participates in L-aspartate binding. ATP-binding positions include 218-220 (RDE) and glutamine 227. Residue histidine 449 coordinates L-aspartate. ATP is bound at residue glutamate 483. Residue arginine 490 participates in L-aspartate binding. An ATP-binding site is contributed by 535 to 538 (GLDR).

The protein belongs to the class-II aminoacyl-tRNA synthetase family. Type 1 subfamily. In terms of assembly, homodimer.

It localises to the cytoplasm. The catalysed reaction is tRNA(Asp) + L-aspartate + ATP = L-aspartyl-tRNA(Asp) + AMP + diphosphate. Functionally, catalyzes the attachment of L-aspartate to tRNA(Asp) in a two-step reaction: L-aspartate is first activated by ATP to form Asp-AMP and then transferred to the acceptor end of tRNA(Asp). This is Aspartate--tRNA ligase from Mannheimia succiniciproducens (strain KCTC 0769BP / MBEL55E).